A 377-amino-acid chain; its full sequence is MQVSEITHRTKTRPVKVGPLTIGGNNEVVIQSMTTTKTHDVEATVAEINRLAEAGCQIVRVACPDERAANAIADIKKRISIPLVVDIHFDYKLALKAIEGGADKIRINPGNIGRREKVEAVVKAAKDKGIPIRIGVNAGSLEKRILEKYGYPTADGMVESALHHIKILEDLDFHDIIVSMKASDVNLAIEAYEKAAKAFDYPLHLGITESGTLFAGTVKSAAGLGAILSKGIGNTMRISLSADPVEEVKVARELLKSFGLASNAATLISCPTCGRIEIDLISIANEVEEYISKIKAPIKVAVLGCAVNGPGEAREADIGIAGARGEGLLFRKGKIVRKVPEETMVEELKKEIDILAEEHYAKLEAEKAKLKEETQKA.

The [4Fe-4S] cluster site is built by cysteine 270, cysteine 273, cysteine 305, and glutamate 312.

The protein belongs to the IspG family. Requires [4Fe-4S] cluster as cofactor.

The enzyme catalyses (2E)-4-hydroxy-3-methylbut-2-enyl diphosphate + oxidized [flavodoxin] + H2O + 2 H(+) = 2-C-methyl-D-erythritol 2,4-cyclic diphosphate + reduced [flavodoxin]. The protein operates within isoprenoid biosynthesis; isopentenyl diphosphate biosynthesis via DXP pathway; isopentenyl diphosphate from 1-deoxy-D-xylulose 5-phosphate: step 5/6. In terms of biological role, converts 2C-methyl-D-erythritol 2,4-cyclodiphosphate (ME-2,4cPP) into 1-hydroxy-2-methyl-2-(E)-butenyl 4-diphosphate. In Bacillus subtilis (strain 168), this protein is 4-hydroxy-3-methylbut-2-en-1-yl diphosphate synthase (flavodoxin).